A 205-amino-acid polypeptide reads, in one-letter code: Small ribosomal subunit protein bS16 (205 aa).

The interval 110 to 205 is disordered; the sequence is GEEVKIAVGT…ADDNEEPEDE (96 aa). A compositionally biased stretch (basic and acidic residues) spans 123–132; sequence DPLERERERA. Positions 153–205 are enriched in acidic residues; that stretch reads EETEAEEAEDVETADAEDADAASETDEPEAAADEADETDASADADDNEEPEDE.

The protein belongs to the bacterial ribosomal protein bS16 family.

This Salinibacter ruber (strain DSM 13855 / M31) protein is Small ribosomal subunit protein bS16.